Consider the following 373-residue polypeptide: Acyl-CoA dehydrogenase FadE27 (373 aa).

3 residues coordinate FAD: Arg251, His327, and Gly331.

The protein belongs to the acyl-CoA dehydrogenase family. In terms of assembly, heterotetramer (dimer of heterodimers) composed of FadE26 and FadE27. Requires FAD as cofactor.

The catalysed reaction is (25S)-3-oxocholest-4-en-26-oyl-CoA + A = 3-oxo-cholest-4,24-dien-26-oyl-CoA + AH2. The protein operates within steroid metabolism; cholesterol degradation. Its activity is regulated as follows. Uncompetitively inhibited by high concentration of 3-OCS-CoA. In terms of biological role, involved in the first cycle of side chain dehydrogenation in the beta-oxidation of cholesterol catabolism. It contributes partly to the virulence by increasing the efficiency of beta-oxidation. Catalyzes the dehydrogenation of acyl-CoA ester side chains of (25S)-3-oxo-cholest-4-en-26-oyl-CoA (3-OCS-CoA) to yield (24E)-3-oxo-cholest-4,24-dien-26-oyl-CoA. Also able to dehydrogenate steroyl-CoA such as 3-oxo-chol-4-en-24-oyl-CoA (3-OCO-CoA) as well as 3-oxo-4-pregnene-20-carboxyl-CoA (3-OPC-CoA). It dehydrogenates only (25S)-OCS-CoA diastereomer. The protein is Acyl-CoA dehydrogenase FadE27 (fadE27) of Mycobacterium tuberculosis (strain ATCC 25618 / H37Rv).